A 159-amino-acid chain; its full sequence is Phosphopantetheine adenylyltransferase (159 aa).

Thr-9 is a binding site for substrate. Residues 9 to 10 (TF) and His-17 contribute to the ATP site. 3 residues coordinate substrate: Lys-41, Leu-73, and Arg-87. ATP is bound by residues 88–90 (GLR), Glu-98, and 123–129 (YSFISST).

This sequence belongs to the bacterial CoaD family. In terms of assembly, homohexamer. The cofactor is Mg(2+).

Its subcellular location is the cytoplasm. The enzyme catalyses (R)-4'-phosphopantetheine + ATP + H(+) = 3'-dephospho-CoA + diphosphate. It functions in the pathway cofactor biosynthesis; coenzyme A biosynthesis; CoA from (R)-pantothenate: step 4/5. Reversibly transfers an adenylyl group from ATP to 4'-phosphopantetheine, yielding dephospho-CoA (dPCoA) and pyrophosphate. This chain is Phosphopantetheine adenylyltransferase, found in Pseudomonas aeruginosa (strain LESB58).